Consider the following 424-residue polypeptide: UPF0597 protein Sputcn32_1209 (424 aa).

It belongs to the UPF0597 family.

In Shewanella putrefaciens (strain CN-32 / ATCC BAA-453), this protein is UPF0597 protein Sputcn32_1209.